We begin with the raw amino-acid sequence, 630 residues long: Tyrosinase (630 aa).

Residues H69, H92, H101, H317, H321, and H360 each coordinate Cu cation. Residues 90–92 (CVH) constitute a cross-link (2'-(S-cysteinyl)-histidine (Cys-His)).

This sequence belongs to the tyrosinase family. Cu(2+) serves as cofactor.

The catalysed reaction is 2 L-dopa + O2 = 2 L-dopaquinone + 2 H2O. It carries out the reaction L-tyrosine + O2 = L-dopaquinone + H2O. In terms of biological role, this is a copper-containing oxidase that functions in the formation of pigments such as melanins and other polyphenolic compounds. This Aspergillus fumigatus (strain ATCC MYA-4609 / CBS 101355 / FGSC A1100 / Af293) (Neosartorya fumigata) protein is Tyrosinase (tyr1).